The sequence spans 253 residues: 3-deoxy-manno-octulosonate cytidylyltransferase (253 aa).

Belongs to the KdsB family.

The protein localises to the cytoplasm. It carries out the reaction 3-deoxy-alpha-D-manno-oct-2-ulosonate + CTP = CMP-3-deoxy-beta-D-manno-octulosonate + diphosphate. Its pathway is nucleotide-sugar biosynthesis; CMP-3-deoxy-D-manno-octulosonate biosynthesis; CMP-3-deoxy-D-manno-octulosonate from 3-deoxy-D-manno-octulosonate and CTP: step 1/1. It functions in the pathway bacterial outer membrane biogenesis; lipopolysaccharide biosynthesis. Activates KDO (a required 8-carbon sugar) for incorporation into bacterial lipopolysaccharide in Gram-negative bacteria. The polypeptide is 3-deoxy-manno-octulosonate cytidylyltransferase (Pseudoalteromonas translucida (strain TAC 125)).